The following is a 358-amino-acid chain: Fructose-bisphosphate aldolase 2, cytoplasmic (358 aa).

Arg39 is a substrate binding site. Glu183 serves as the catalytic Proton acceptor. Lys225 acts as the Schiff-base intermediate with dihydroxyacetone-P in catalysis. Substrate-binding positions include 266-268 and Arg298; that span reads SGG.

Belongs to the class I fructose-bisphosphate aldolase family. Homotetramer.

The protein resides in the cytoplasm. Its subcellular location is the cytosol. The catalysed reaction is beta-D-fructose 1,6-bisphosphate = D-glyceraldehyde 3-phosphate + dihydroxyacetone phosphate. Its pathway is carbohydrate degradation; glycolysis; D-glyceraldehyde 3-phosphate and glycerone phosphate from D-glucose: step 4/4. Functionally, fructose-bisphosphate aldolase that plays a key role in glycolysis and gluconeogenesis. The protein is Fructose-bisphosphate aldolase 2, cytoplasmic of Oryza sativa subsp. japonica (Rice).